The following is a 158-amino-acid chain: uncharacterized protein (158 aa).

4 consecutive transmembrane segments (helical) span residues Ile12–Val32, Leu39–Val59, Leu90–Ile110, and Ile113–Leu133.

It is found in the cell membrane. This is an uncharacterized protein from Mycoplasma genitalium (strain ATCC 33530 / DSM 19775 / NCTC 10195 / G37) (Mycoplasmoides genitalium).